A 183-amino-acid polypeptide reads, in one-letter code: Putative 3-methyladenine DNA glycosylase (183 aa).

It belongs to the DNA glycosylase MPG family.

This is Putative 3-methyladenine DNA glycosylase from Legionella pneumophila (strain Corby).